A 901-amino-acid polypeptide reads, in one-letter code: MENFQYSVQLSDQDWAEFSAAAEECGLLQAGLASGDEPLSSDTDQRDSRGSSPPGPSPFLEGQLTPGGSSWPSFEEEDKAATRQLVSRSWHEPMLAPEAGQQTPSTSAQSEARLSLSPGATPLVQGSSLPGPVSSRDEMQRLLRGPAPRGPAPTPTGEPAGSPESPVHSAAPQRSPGSPGAPPRSPGRKKRRTAGTKAGGRSGGPGPAPTQLDSPLLTEAKPEDSFGPAGSRGKGLPAGAAKQTAGTGPESAGAPEQVAGQGPGVDLSTSVSTTEQGTDRLGMSPRADPCAASTSDPGAPLDVTIKSDVALSTPASEPQPDKPQSTPAFKPQPDEPQSTPAFKPQPDESQSTSAFNAQPNEPQSTPTFSPQPDEPQSTPAFKPQPDEPQSTSAFNAQPNEPQSTLAFSPQPDEPQSTPAFKPQPDEPQSTPAFNVQPNEPQSTPAFSPQPNEPQSTPAFKPQPDEPQSTPAFNTQPNEPQSTPTFKPRLDVDQLMPGPVVQPEVDSSMPASKAVPCTALPHLVLEAGSDVGVSTPPAPTPQAGPDMVEAEVVPVAKLGLSPVRSLEGHQQNPRGEPSTDAPGHHTGEPPLGPIQAPKKKKVRFSMAMPSSEEPGSGEVSGPLSPATAPRMASGGHRGSGAWDSVAVGPRSPQPRILKHLPPPAPSASMGPGRRSCFAVTLPEAYDFFFCDTIEEEDEEAEGAAEAAQAPAEVQWPDVCEFFFQESQIQRSRHQEGRSQAPLLKAGSVPAPPPGDPMPISIPEAYEHFLEEDRSGGTLGPAALLQMQATEPSRSVLWGVGTGAPPESSPATVEQLTLAIREAVAPRGPLTSFTFSQKDMCMVFVAFATWAVRTSDLHAPDAWKTVLLANIGTISAIRYFRRQVERGRHSRSRSPSPSSSPSP.

3 disordered regions span residues 29–511, 564–671, and 731–752; these read QAGL…MPAS, SLEG…MGPG, and RHQE…APPP. Residues 100–112 are compositionally biased toward polar residues; sequence GQQTPSTSAQSEA. The span at 157–178 shows a compositional bias: low complexity; sequence GEPAGSPESPVHSAAPQRSPGS. Composition is skewed to polar residues over residues 267-276, 347-379, 387-418, 426-457, and 465-484; these read LSTSVSTTEQ, DESQ…QSTP, EPQS…QSTP, and EPQS…STPT. Over residues 608 to 624 the composition is skewed to low complexity; sequence PSSEEPGSGEVSGPLSP.

Its subcellular location is the cytoplasm. The protein localises to the nucleus. Regulates the expression of selective PPARGC1A/B and ESRRA/B/G target genes with roles in glucose and lipid metabolism, energy transfer, contractile function, muscle mitochondrial biogenesis and oxidative capacity. Required for the efficient induction of MT-CO2, MT-CO3, COX4I1, TFB1M, TFB2M, POLRMT and SIRT3 by PPARGC1A. Positively regulates the PPARGC1A/ESRRG-induced expression of CKMT2, TNNI3 and SLC2A4 and negatively regulates the PPARGC1A/ESRRG-induced expression of PDK4. This Bos taurus (Bovine) protein is PGC-1 and ERR-induced regulator in muscle protein 1 (PERM1).